The sequence spans 679 residues: Methionine--tRNA ligase (679 aa).

The 'HIGH' region signature appears at 15-25; sequence PYANGPIHLGH. Residues cysteine 146, cysteine 149, cysteine 159, and cysteine 162 each contribute to the Zn(2+) site. A 'KMSKS' region motif is present at residues 332–336; the sequence is KMSKS. Residue lysine 335 coordinates ATP. Residues 578 to 679 enclose the tRNA-binding domain; that stretch reads DFAKIDLRIA…EGAQPGMKVK (102 aa).

This sequence belongs to the class-I aminoacyl-tRNA synthetase family. MetG type 1 subfamily. As to quaternary structure, homodimer. Requires Zn(2+) as cofactor.

Its subcellular location is the cytoplasm. The catalysed reaction is tRNA(Met) + L-methionine + ATP = L-methionyl-tRNA(Met) + AMP + diphosphate. Its function is as follows. Is required not only for elongation of protein synthesis but also for the initiation of all mRNA translation through initiator tRNA(fMet) aminoacylation. The polypeptide is Methionine--tRNA ligase (Shewanella pealeana (strain ATCC 700345 / ANG-SQ1)).